The sequence spans 339 residues: Ectoine/5-hydroxyectoine-binding periplasmic protein UehA (339 aa).

The N-terminal stretch at 1-20 (MAQSITFTFGAVAAAGIALA) is a signal peptide. Positions 36, 171, 211, 215, and 236 each coordinate L-ectoine. Cysteines 162 and 303 form a disulfide.

The protein belongs to the bacterial solute-binding protein 7 family. Monomer. The complex comprises the extracytoplasmic solute receptor protein UehA, and the two transmembrane proteins UehB and UehC.

The protein resides in the periplasm. Part of the tripartite ATP-independent periplasmic (TRAP) transport system UehABC, which imports both ectoine and 5-hydroxyectoine as nutrients, and not as osmoprotectants. UehA binds both ectoine and 5-hydroxyectoine with high specificity and affinity. In Ruegeria pomeroyi (strain ATCC 700808 / DSM 15171 / DSS-3) (Silicibacter pomeroyi), this protein is Ectoine/5-hydroxyectoine-binding periplasmic protein UehA.